Consider the following 198-residue polypeptide: Proteasome subunit beta type-2 (198 aa).

The protein belongs to the peptidase T1B family. The 26S proteasome consists of a 20S proteasome core and two 19S regulatory subunits. The 20S proteasome core is composed of 28 subunits that are arranged in four stacked rings, resulting in a barrel-shaped structure. The two end rings are each formed by seven alpha subunits, and the two central rings are each formed by seven beta subunits. The catalytic chamber with the active sites is on the inside of the barrel.

It is found in the cytoplasm. It localises to the nucleus. Functionally, non-catalytic component of the proteasome, a multicatalytic proteinase complex which is characterized by its ability to cleave peptides with Arg, Phe, Tyr, Leu, and Glu adjacent to the leaving group at neutral or slightly basic pH. The proteasome has an ATP-dependent proteolytic activity. The sequence is that of Proteasome subunit beta type-2 (psmB2) from Dictyostelium discoideum (Social amoeba).